We begin with the raw amino-acid sequence, 83 residues long: Small ribosomal subunit protein bS16 (83 aa).

The protein belongs to the bacterial ribosomal protein bS16 family.

In Pseudomonas aeruginosa (strain LESB58), this protein is Small ribosomal subunit protein bS16.